We begin with the raw amino-acid sequence, 230 residues long: MKNPMLEAVSLVLEKLLFISYFKFFSSGAPGQDKAGNTLYEISSFLRGDVLEVPRTHLTHYGIYLGDNRVAHMMPDILLALTDDKGRTQKVVSNKRLILGVIGRVASIRVDTVEDFAYGAEILVNHLDRSLKKKALLNEEVAQRAEKLLGITPYSLLWNNCEHFVTYCRYGTPISPQADKFCENVKIIIRDQRSVLASAVLGLASIFCLGLTSYTTLPAIFIPFLLWMAG.

The Cytoplasmic portion of the chain corresponds to 1–194 (MKNPMLEAVS…VKIIIRDQRS (194 aa)). An LRAT domain is found at 50–177 (VLEVPRTHLT…CRYGTPISPQ (128 aa)). Residues His60 and His72 contribute to the active site. Cys161 acts as the Acyl-thioester intermediate in catalysis. Residues 195–215 (VLASAVLGLASIFCLGLTSYT) traverse the membrane as a helical segment. Residues 216–230 (TLPAIFIPFLLWMAG) lie on the Lumenal side of the membrane.

It belongs to the H-rev107 family.

It localises to the endoplasmic reticulum membrane. The protein localises to the rough endoplasmic reticulum. It is found in the endosome. Its subcellular location is the multivesicular body. The protein resides in the cytoplasm. It localises to the perinuclear region. The catalysed reaction is all-trans-retinol--[retinol-binding protein] + a 1,2-diacyl-sn-glycero-3-phosphocholine = apo--[retinol-binding protein] + an all-trans-retinyl ester + a 2-acyl-sn-glycero-3-phosphocholine. The enzyme catalyses 1,2-dihexadecanoyl-sn-glycero-3-phosphocholine + all-trans-retinol = all-trans-retinyl hexadecanoate + 2-hexadecanoyl-sn-glycero-3-phosphocholine. It carries out the reaction 1,2-diheptanoyl-sn-glycero-3-phosphocholine + all-trans-retinol--[retinol-binding protein] = all-trans-retinyl heptanoate + 2-heptanoyl-sn-glycero-3-phosphocholine + apo--[retinol-binding protein]. It catalyses the reaction 1,2-dioctanoyl-sn-glycero-3-phosphocholine + all-trans-retinol--[retinol-binding protein] = 2-octanoyl-sn-glycero-3-phosphocholine + all-trans-retinyl octanoate + apo--[retinol-binding protein]. The catalysed reaction is all-trans-retinol--[retinol-binding protein] + 1,2-dihexadecanoyl-sn-glycero-3-phosphocholine = apo--[retinol-binding protein] + all-trans-retinyl hexadecanoate + 2-hexadecanoyl-sn-glycero-3-phosphocholine. The enzyme catalyses 1,2-didodecanoyl-sn-glycero-3-phosphocholine + all-trans-retinol--[retinol-binding protein] = 2-dodecanoyl-sn-glycero-3-phosphocholine + all-trans-retinyl dodecanoate + apo--[retinol-binding protein]. Its pathway is cofactor metabolism; retinol metabolism. Inhibited by all-trans-retinyl alpha-bromoacetate and N-boc-L-biocytinyl-11-aminoundecane chloro-methyl ketone (BACMK). Transfers the acyl group from the sn-1 position of phosphatidylcholine to all-trans retinol, producing all-trans retinyl esters. Retinyl esters are storage forms of vitamin A. LRAT plays a critical role in vision. It provides the all-trans retinyl ester substrates for the isomerohydrolase which processes the esters into 11-cis-retinol in the retinal pigment epithelium; due to a membrane-associated alcohol dehydrogenase, 11 cis-retinol is oxidized and converted into 11-cis-retinaldehyde which is the chromophore for rhodopsin and the cone photopigments. Required for the survival of cone photoreceptors and correct rod photoreceptor cell morphology. The protein is Lecithin retinol acyltransferase (LRAT) of Bos taurus (Bovine).